A 202-amino-acid polypeptide reads, in one-letter code: Protein-methionine-sulfoxide reductase heme-binding subunit MsrQ (202 aa).

6 helical membrane passes run 8-28 (YAWL…FLLW), 50-70 (LALI…WLGW), 76-96 (IRKA…GIYL), 114-134 (PFIT…LTSG), 148-168 (LLHR…WWGV), and 174-194 (GPLL…KTPA).

This sequence belongs to the MsrQ family. In terms of assembly, heterodimer of a catalytic subunit (MsrP) and a heme-binding subunit (MsrQ). It depends on FMN as a cofactor. Requires heme b as cofactor.

The protein resides in the cell membrane. Part of the MsrPQ system that repairs oxidized cell envelope proteins containing methionine sulfoxide residues (Met-O), using respiratory chain electrons. Thus protects these proteins from oxidative-stress damage caused by reactive species of oxygen and chlorine. MsrPQ is essential for the maintenance of envelope integrity under bleach stress, rescuing a wide series of structurally unrelated cell envelope proteins from methionine oxidation. MsrQ provides electrons for reduction to the reductase catalytic subunit MsrP, using the quinone pool of the respiratory chain. The protein is Protein-methionine-sulfoxide reductase heme-binding subunit MsrQ of Deinococcus radiodurans (strain ATCC 13939 / DSM 20539 / JCM 16871 / CCUG 27074 / LMG 4051 / NBRC 15346 / NCIMB 9279 / VKM B-1422 / R1).